A 247-amino-acid chain; its full sequence is Submandibular gland secretory Glx-rich protein CB (247 aa).

A signal peptide spans 1 to 18 (MLVVLLTAALLALSSAQG). The interval 14-219 (SSAQGTDEEV…PQHYRGRPPK (206 aa)) is disordered. 7 stretches are compositionally biased toward low complexity: residues 39–50 (PVDSGSDPPSAD), 58–71 (EGES…EPPA), 81–93 (QQEP…QEPP), 104–116 (QQEP…QEPP), 126–139 (QQQQ…QEPP), 150–159 (QQESTQAENQ), and 178–196 (VESP…QQTN). Tandem repeats lie at residues 67-89 (EEPP…QAEN), 90-112 (QEPP…QAEN), 113-135 (QEPP…QAEN), 136-158 (QEPP…QAEN), and 159-181 (QEPS…VESP). The segment at 67 to 181 (EEPPATSGSE…QPEEGNVESP (115 aa)) is 5 X 23 AA tandem repeats. Residues 197–212 (PEEKPPAPKTQEEPQH) are compositionally biased toward basic and acidic residues.

As to expression, submandibular gland acinar cells.

Its subcellular location is the secreted. Its function is as follows. GRP proteins have a marked affinity for hydroxyapatite. They may play a role in the formation of the protective acquired pellicle at the saliva-tooth interface. This is Submandibular gland secretory Glx-rich protein CB (Grpcb) from Rattus norvegicus (Rat).